The chain runs to 182 residues: UPF0397 protein SPP_0507 (182 aa).

Transmembrane regions (helical) follow at residues V10–T30, L46–I66, Y73–F93, I109–P129, and I148–A168.

The protein belongs to the UPF0397 family.

The protein resides in the cell membrane. This chain is UPF0397 protein SPP_0507, found in Streptococcus pneumoniae (strain P1031).